The chain runs to 284 residues: F-box protein PP2-B13 (284 aa).

Residues 1–44 (MMMLPEACVANILAFTSPADAFSSSEVSSVFRLAGDSDFVWEKF) enclose the F-box domain.

The sequence is that of F-box protein PP2-B13 (PP2B13) from Arabidopsis thaliana (Mouse-ear cress).